Consider the following 118-residue polypeptide: Ribonuclease P protein component (118 aa).

The protein belongs to the RnpA family. As to quaternary structure, consists of a catalytic RNA component (M1 or rnpB) and a protein subunit.

The catalysed reaction is Endonucleolytic cleavage of RNA, removing 5'-extranucleotides from tRNA precursor.. Functionally, RNaseP catalyzes the removal of the 5'-leader sequence from pre-tRNA to produce the mature 5'-terminus. It can also cleave other RNA substrates such as 4.5S RNA. The protein component plays an auxiliary but essential role in vivo by binding to the 5'-leader sequence and broadening the substrate specificity of the ribozyme. The chain is Ribonuclease P protein component from Vibrio vulnificus (strain CMCP6).